Reading from the N-terminus, the 170-residue chain is Odorant-binding protein 2b (170 aa).

The N-terminal stretch at 1-15 (MKTLFLGVTLGLAAA) is a signal peptide. Residues C74 and C166 are joined by a disulfide bond.

It belongs to the calycin superfamily. Lipocalin family. In terms of tissue distribution, strongly expressed in genital sphere organs such as the prostate and mammary glands.

Its subcellular location is the secreted. Its function is as follows. Probably binds and transports small hydrophobic volatile molecules. This chain is Odorant-binding protein 2b (OBP2B), found in Homo sapiens (Human).